The sequence spans 72 residues: MEKKSLACLSFLLLVLFVAQEIVVSEANTCENLAGSYKGVCFGGCDRHCRTQEGAISGRCRDDFRCWCTKNC.

Residues 1-27 (MEKKSLACLSFLLLVLFVAQEIVVSEA) form the signal peptide. Intrachain disulfides connect cysteine 30-cysteine 72, cysteine 41-cysteine 60, cysteine 45-cysteine 66, and cysteine 49-cysteine 68.

Belongs to the DEFL family.

It is found in the secreted. The polypeptide is Defensin-like protein 230 (PI230) (Pisum sativum (Garden pea)).